We begin with the raw amino-acid sequence, 476 residues long: Nyctalopin (476 aa).

Positions 1–18 (MLVLLLHAVVLGLPSAWA) are cleaved as a signal peptide. LRR repeat units lie at residues 60–84 (VSIDLDRNGLRFLGERAFGTLPSLR), 85–108 (RLSLRHNNLSFITPGAFKGLPRLA), 110–133 (LRLAHNGDLRYLHARTFAALSRLR), 134–157 (RLDLAACRLFSVPERLLAELPALR), 159–181 (LAAFDNLFRRVPGALRGLANLTH), 182–204 (AHLERGRIEAVASSSLQGLRRLR), 205–228 (SLSLQANRVRAVHAGAFGDCGVLE), 229–252 (HLLLNDNLLAELPADAFRGLRRLR), 254–276 (LNLGGNALDRVARAWFADLAELE), 277–300 (LLYLDRNSIAFVEEGAFQNLSGLL), and 302–324 (LHLNGNRLTVLAWVAFQPGFFLG). N-linked (GlcNAc...) asparagine glycosylation is present at Asn92. An N-linked (GlcNAc...) asparagine glycan is attached at Asn178. N-linked (GlcNAc...) asparagine glycosylation occurs at Asn295. The LRRCT domain maps to 336-387 (DCRLEWLRDWMEGSGRVTDVPCASPGSVAGLDLSQVTFGRSSDGLCVDPEEL). Residues Asn388, Asn427, and Asn434 are each glycosylated (N-linked (GlcNAc...) asparagine).

The protein belongs to the small leucine-rich proteoglycan (SLRP) family. SLRP class IV subfamily. In terms of tissue distribution, expressed in kidney and retina. Also at low levels in brain, testis and muscle. Within the retina, expressed in the inner segment of photoreceptors, outer and inner nuclear layers and the ganglion cell layer.

Its subcellular location is the secreted. It is found in the extracellular space. The protein resides in the extracellular matrix. This is Nyctalopin (NYX) from Homo sapiens (Human).